The following is a 225-amino-acid chain: Uracil-DNA glycosylase (225 aa).

Asp-68 functions as the Proton acceptor in the catalytic mechanism.

This sequence belongs to the uracil-DNA glycosylase (UDG) superfamily. UNG family.

The protein resides in the cytoplasm. It catalyses the reaction Hydrolyzes single-stranded DNA or mismatched double-stranded DNA and polynucleotides, releasing free uracil.. In terms of biological role, excises uracil residues from the DNA which can arise as a result of misincorporation of dUMP residues by DNA polymerase or due to deamination of cytosine. This is Uracil-DNA glycosylase from Mycolicibacterium gilvum (strain PYR-GCK) (Mycobacterium gilvum (strain PYR-GCK)).